A 404-amino-acid chain; its full sequence is MQIGQRIGTPLSESATRVMLLGAGELGKEVIIALQRLGVEVIAVDRYPNAPGHQVAHRAHVIDMTDRAALRALVEQERPHLIVPEIEAIATDELAAIESAGLAEVIPTARATQLTMNREGIRRLAAEELGLPTSPYAFADSLDELRAGIAKVGYPCVVKPVMSSSGKGQSVLRGDADVEPAWQYAMAGGRVNHGRVIVEGFIDFEYEITQLTVRAINPASGEVSTYFCDPIGHVQVAGDYVESWQPQPMSPLALERSREVAHKVTAALGGRGLFGVELFVRGDDVWFSEVSPRPHDTGLVTLCSQRFSEFELHARAILGLPVDTSLRAPGASAVIYGGLDEAGIAFEGVAAALAVPNADLRLFGKPESFVKRRMGVALATGETTDEARSRAKQAAAAVRPVSAK.

Residues 25 to 26 and Glu-85 contribute to the N(1)-(5-phospho-beta-D-ribosyl)glycinamide site; that span reads EL. ATP is bound by residues Arg-118, Lys-159, 164–169, 199–202, and Glu-207; these read SSGKGQ and EGFI. In terms of domain architecture, ATP-grasp spans 123 to 318; that stretch reads RLAAEELGLP…EFELHARAIL (196 aa). Residues Glu-277 and Glu-289 each coordinate Mg(2+). N(1)-(5-phospho-beta-D-ribosyl)glycinamide contacts are provided by residues Asp-296, Lys-365, and 372–373; that span reads RR. The disordered stretch occupies residues 384-404; sequence TDEARSRAKQAAAAVRPVSAK. Residues 392 to 404 are compositionally biased toward low complexity; the sequence is KQAAAAVRPVSAK.

This sequence belongs to the PurK/PurT family. As to quaternary structure, homodimer.

The enzyme catalyses N(1)-(5-phospho-beta-D-ribosyl)glycinamide + formate + ATP = N(2)-formyl-N(1)-(5-phospho-beta-D-ribosyl)glycinamide + ADP + phosphate + H(+). The protein operates within purine metabolism; IMP biosynthesis via de novo pathway; N(2)-formyl-N(1)-(5-phospho-D-ribosyl)glycinamide from N(1)-(5-phospho-D-ribosyl)glycinamide (formate route): step 1/1. Involved in the de novo purine biosynthesis. Catalyzes the transfer of formate to 5-phospho-ribosyl-glycinamide (GAR), producing 5-phospho-ribosyl-N-formylglycinamide (FGAR). Formate is provided by PurU via hydrolysis of 10-formyl-tetrahydrofolate. This Paraburkholderia xenovorans (strain LB400) protein is Formate-dependent phosphoribosylglycinamide formyltransferase.